Here is a 61-residue protein sequence, read N- to C-terminus: Large ribosomal subunit protein uL30 (61 aa).

Belongs to the universal ribosomal protein uL30 family. In terms of assembly, part of the 50S ribosomal subunit.

The polypeptide is Large ribosomal subunit protein uL30 (Latilactobacillus sakei subsp. sakei (strain 23K) (Lactobacillus sakei subsp. sakei)).